Reading from the N-terminus, the 276-residue chain is Omega-amidase NIT2-A (276 aa).

The 245-residue stretch at 4–248 folds into the CN hydrolase domain; it reads FKLSLVQFLV…ETVLSAEIDL (245 aa). The Proton acceptor role is filled by glutamate 43. Lysine 112 acts as the Proton donor in catalysis. Cysteine 153 functions as the Nucleophile in the catalytic mechanism.

It belongs to the carbon-nitrogen hydrolase superfamily. NIT1/NIT2 family. In terms of assembly, homodimer.

Its subcellular location is the cytoplasm. It catalyses the reaction 2-oxoglutaramate + H2O = 2-oxoglutarate + NH4(+). The enzyme catalyses 2-oxosuccinamate + H2O = oxaloacetate + NH4(+). Has omega-amidase activity. The role of omega-amidase is to remove potentially toxic intermediates by converting 2-oxoglutaramate and 2-oxosuccinamate to biologically useful 2-oxoglutarate and oxaloacetate, respectively. In Xenopus laevis (African clawed frog), this protein is Omega-amidase NIT2-A (nit2a).